The primary structure comprises 394 residues: S-adenosylmethionine synthase (394 aa).

Histidine 18 is an ATP binding site. Aspartate 20 is a binding site for Mg(2+). Residue glutamate 46 coordinates K(+). 2 residues coordinate L-methionine: glutamate 59 and glutamine 104. Residues glutamine 104 to alanine 114 form a flexible loop region. ATP contacts are provided by residues aspartate 174–lysine 176, lysine 240–phenylalanine 241, aspartate 249, arginine 255–lysine 256, alanine 272, and lysine 276. L-methionine is bound at residue aspartate 249. Lysine 280 is an L-methionine binding site.

The protein belongs to the AdoMet synthase family. Homotetramer; dimer of dimers. Mg(2+) serves as cofactor. Requires K(+) as cofactor.

The protein resides in the cytoplasm. The enzyme catalyses L-methionine + ATP + H2O = S-adenosyl-L-methionine + phosphate + diphosphate. The protein operates within amino-acid biosynthesis; S-adenosyl-L-methionine biosynthesis; S-adenosyl-L-methionine from L-methionine: step 1/1. In terms of biological role, catalyzes the formation of S-adenosylmethionine (AdoMet) from methionine and ATP. The overall synthetic reaction is composed of two sequential steps, AdoMet formation and the subsequent tripolyphosphate hydrolysis which occurs prior to release of AdoMet from the enzyme. The protein is S-adenosylmethionine synthase of Akkermansia muciniphila (strain ATCC BAA-835 / DSM 22959 / JCM 33894 / BCRC 81048 / CCUG 64013 / CIP 107961 / Muc).